A 431-amino-acid polypeptide reads, in one-letter code: uncharacterized protein (431 aa).

2 disordered regions span residues 17 to 66 (VDPE…GQQA) and 81 to 415 (GSVT…ALPR). Positions 91 to 106 (DKADREPAARPRDPRS) are enriched in basic and acidic residues. The segment covering 173 to 195 (TYRRRRPTAATPSRKKKARRGPK) has biased composition (basic residues). Residues 235 to 244 (RTPGPVHSAA) show a composition bias toward low complexity. Over residues 299-312 (RMGGSSGGRGGTPG) the composition is skewed to gly residues. The span at 317–342 (RAAPGARPTAPDGAPGRWDGPADGPA) shows a compositional bias: low complexity. Residues 343–360 (PGLGRGGWGVGREAGGSG) show a composition bias toward gly residues.

This is an uncharacterized protein from Homo sapiens (Human).